Here is a 333-residue protein sequence, read N- to C-terminus: MVSSTPEMLQGGLTREQIVPSRKRIKLPAWLEIAKPRLIPLLLATTLGGMALSEGWPLPSLRLACTLGGGALAAAAAGVLNCIWEQDLDGRMQRTSGRALPSGRLSPTAAFIGAISCTLAAAALLVSGVNCLAAGLSLLGLCSYVLLYTAILKPRTPQNIVIGGVAGAIPPLVGAAAASGHVGLSGWWLFALVMLWTPAHFWALALLLRDDYRAVGIPMLPVVKGPVVTVRAISRYGWATVLLSGFGVWALPEGGLLYGLLLIPFNARLLQMVHQLGAAPENVDRAKGLFRWSIFYMFGICLLLVVSRLPMAANFDLQAWSLLQQMASSGQFI.

Transmembrane regions (helical) follow at residues 63 to 83 (LACTLGGGALAAAAAGVLNCI), 109 to 129 (AAFIGAISCTLAAAALLVSGV), 132 to 152 (LAAGLSLLGLCSYVLLYTAIL), 160 to 180 (IVIGGVAGAIPPLVGAAAASG), 188 to 208 (WLFALVMLWTPAHFWALALLL), 245 to 265 (GFGVWALPEGGLLYGLLLIPF), and 292 to 312 (WSIFYMFGICLLLVVSRLPMA).

The protein belongs to the UbiA prenyltransferase family. Protoheme IX farnesyltransferase subfamily.

The protein localises to the cell inner membrane. The catalysed reaction is heme b + (2E,6E)-farnesyl diphosphate + H2O = Fe(II)-heme o + diphosphate. It participates in porphyrin-containing compound metabolism; heme O biosynthesis; heme O from protoheme: step 1/1. Functionally, converts heme B (protoheme IX) to heme O by substitution of the vinyl group on carbon 2 of heme B porphyrin ring with a hydroxyethyl farnesyl side group. This is Protoheme IX farnesyltransferase from Prochlorococcus marinus (strain MIT 9303).